Here is a 217-residue protein sequence, read N- to C-terminus: MRIFSETEIRIIGCLIEKEITTPEQYPLTLNALTTACNQKSNRDPVTSLTDSDVLDSVNALIQERIITDETRGNSRVAKYQHRFCNTEFGSLKLSKQELAVLCVLFLRGPQTPGELRTRTQRLCEFDNVAQVENVLNGLSADEHSPKVIKLAKEPGKREARFAHLFCGEVSQATATVQQAPSESHDNERIVALESDVADLKLEVEELKKLINNLLDK.

This sequence belongs to the UPF0502 family.

The polypeptide is UPF0502 protein VFMJ11_A0613 (Aliivibrio fischeri (strain MJ11) (Vibrio fischeri)).